Consider the following 241-residue polypeptide: Triosephosphate isomerase (241 aa).

Residue 8-10 (NWK) participates in substrate binding. Catalysis depends on His-93, which acts as the Electrophile. Catalysis depends on Glu-163, which acts as the Proton acceptor. Substrate-binding positions include Gly-169, Ser-205, and 226-227 (GG).

It belongs to the triosephosphate isomerase family. In terms of assembly, homodimer.

It localises to the cytoplasm. The catalysed reaction is D-glyceraldehyde 3-phosphate = dihydroxyacetone phosphate. It functions in the pathway carbohydrate biosynthesis; gluconeogenesis. Its pathway is carbohydrate degradation; glycolysis; D-glyceraldehyde 3-phosphate from glycerone phosphate: step 1/1. Its function is as follows. Involved in the gluconeogenesis. Catalyzes stereospecifically the conversion of dihydroxyacetone phosphate (DHAP) to D-glyceraldehyde-3-phosphate (G3P). This chain is Triosephosphate isomerase, found in Bdellovibrio bacteriovorus (strain ATCC 15356 / DSM 50701 / NCIMB 9529 / HD100).